We begin with the raw amino-acid sequence, 296 residues long: Formylmethanofuran--tetrahydromethanopterin formyltransferase (296 aa).

It belongs to the FTR family. As to quaternary structure, homotetramer composed of two dimers. Dimerization is sufficient for enzyme activity, but tetramerization is required for high thermostability.

Its subcellular location is the cytoplasm. It catalyses the reaction N-formylmethanofuran + 5,6,7,8-tetrahydromethanopterin + H(+) = N(5)-formyl-5,6,7,8-tetrahydromethanopterin + methanofuran. It participates in one-carbon metabolism; methanogenesis from CO(2); 5,10-methenyl-5,6,7,8-tetrahydromethanopterin from CO(2): step 2/3. Its activity is regulated as follows. Requires high salt concentrations for activity and thermostability; 1.5-1.8 M KH(2)PO(4) stimulates activity while stabilizing the enzyme. Its function is as follows. Catalyzes the reversible transfer of a formyl group from formylmethanofuran (formyl-MFR) to tetrahydromethanopterin (H(4)MPT) to produce 5-formyl tetrahydromethanopterin (5-formyl-H(4)MPT) and methanofuran (MFR). Acts via a ternary-complex mechanism. Uses N-furfurylformamide much less efficiently, does not use N-methylformamide or formamide. Protein overexpressed in E.coli has very similar properties to enzyme purified from M.kandleri. The sequence is that of Formylmethanofuran--tetrahydromethanopterin formyltransferase from Methanopyrus kandleri (strain AV19 / DSM 6324 / JCM 9639 / NBRC 100938).